The sequence spans 503 residues: Probable cytosol aminopeptidase (503 aa).

Lysine 274 and aspartate 279 together coordinate Mn(2+). Residue lysine 286 is part of the active site. Mn(2+) is bound by residues aspartate 297, aspartate 356, and glutamate 358. Residue arginine 360 is part of the active site.

It belongs to the peptidase M17 family. It depends on Mn(2+) as a cofactor.

The protein resides in the cytoplasm. The enzyme catalyses Release of an N-terminal amino acid, Xaa-|-Yaa-, in which Xaa is preferably Leu, but may be other amino acids including Pro although not Arg or Lys, and Yaa may be Pro. Amino acid amides and methyl esters are also readily hydrolyzed, but rates on arylamides are exceedingly low.. It catalyses the reaction Release of an N-terminal amino acid, preferentially leucine, but not glutamic or aspartic acids.. In terms of biological role, presumably involved in the processing and regular turnover of intracellular proteins. Catalyzes the removal of unsubstituted N-terminal amino acids from various peptides. This is Probable cytosol aminopeptidase from Burkholderia pseudomallei (strain 1106a).